Here is a 371-residue protein sequence, read N- to C-terminus: Maltose/maltodextrin import ATP-binding protein MalK (371 aa).

The ABC transporter domain occupies 4 to 234; it reads VQLQNVTKAW…PADRFVAGFI (231 aa). 36–43 is a binding site for ATP; that stretch reads GPSGCGKS.

The protein belongs to the ABC transporter superfamily. Maltooligosaccharide importer (TC 3.A.1.1.1) family. As to quaternary structure, the complex is composed of two ATP-binding proteins (MalK), two transmembrane proteins (MalG and MalK) and a solute-binding protein (MalE).

The protein localises to the cell inner membrane. It catalyses the reaction D-maltose(out) + ATP + H2O = D-maltose(in) + ADP + phosphate + H(+). Functionally, part of the ABC transporter complex MalEFGK involved in maltose/maltodextrin import. Responsible for energy coupling to the transport system. In Escherichia coli O6:K15:H31 (strain 536 / UPEC), this protein is Maltose/maltodextrin import ATP-binding protein MalK.